The following is a 238-amino-acid chain: Ribonuclease PH (238 aa).

The tract at residues 66 to 88 (LPRSTHTRSDREAARGKQSGRTQ) is disordered. Residues Arg86 and 124–126 (GTR) each bind phosphate.

The protein belongs to the RNase PH family. As to quaternary structure, homohexameric ring arranged as a trimer of dimers.

The enzyme catalyses tRNA(n+1) + phosphate = tRNA(n) + a ribonucleoside 5'-diphosphate. In terms of biological role, phosphorolytic 3'-5' exoribonuclease that plays an important role in tRNA 3'-end maturation. Removes nucleotide residues following the 3'-CCA terminus of tRNAs; can also add nucleotides to the ends of RNA molecules by using nucleoside diphosphates as substrates, but this may not be physiologically important. Probably plays a role in initiation of 16S rRNA degradation (leading to ribosome degradation) during starvation. The sequence is that of Ribonuclease PH from Ralstonia pickettii (strain 12J).